The following is a 680-amino-acid chain: Pilus tip adhesin Cpa (680 aa).

The segment at residues 62 to 211 (CFNLTKHFPS…IFQSSDKTFQ (150 aa)) is a cross-link (isoglutamyl cysteine thioester (Cys-Gln)). A disordered region spans residues 217-236 (EYVPDTPPKPGEEPPAKTEK). The segment covering 226–236 (PGEEPPAKTEK) has biased composition (basic and acidic residues). Residues 243-546 (KYAEGDYSKL…ELIDVISMED (304 aa)) constitute a cross-link (isoaspartyl lysine isopeptide (Lys-Asp)). One can recognise a CNA-B domain in the interval 253–311 (LEGATLKLAQIEGSGFQEKIFDSNKSGEKVELPNGTYVLSELKPPQGYGVATPITFKVA). Residues 374-526 (CFNADLHSPP…FFVPNSSRYQ (153 aa)) constitute a cross-link (isoglutamyl cysteine thioester (Cys-Gln)). The isoaspartyl lysine isopeptide (Lys-Asn) cross-link spans 562–667 (KTVTGTIADK…KEDETVAFEN (106 aa)). Residues 672–676 (VPPTG) carry the VPPTG sorting signal motif. Threonine 675 is covalently cross-linked (Threonyl lysine isopeptide (Thr-Lys) (interchain with K-? in major pilin subunit)). Residues 676 to 680 (GLTTD) constitute a propeptide, removed by sortase.

In terms of assembly, monomer. In terms of processing, proteolytically processed and assembled in pili through a transpeptidation reaction catalyzed by a sortase, which leads to a covalent link between Cpa and a major pilin subunit.

It is found in the fimbrium. Component of the pilus tip. Can bind covalently, via its two reactive thioester bonds, to molecular targets from host cell surface and can thus mediate adhesion of the streptococcal pili to host cells. Lysine side chains or a carbohydrate with a free amine group might be candidates for Cpa binding. In vitro, can covalently bind to spermidine, but it is unlikely that spermidine is the natural target of Cpa. The polypeptide is Pilus tip adhesin Cpa (cpa) (Streptococcus pyogenes).